The sequence spans 332 residues: Succinylglutamate desuccinylase (332 aa).

Residues His59, Glu62, and His151 each contribute to the Zn(2+) site. Glu215 is a catalytic residue.

It belongs to the AspA/AstE family. Succinylglutamate desuccinylase subfamily. It depends on Zn(2+) as a cofactor.

It catalyses the reaction N-succinyl-L-glutamate + H2O = L-glutamate + succinate. The protein operates within amino-acid degradation; L-arginine degradation via AST pathway; L-glutamate and succinate from L-arginine: step 5/5. Transforms N(2)-succinylglutamate into succinate and glutamate. This chain is Succinylglutamate desuccinylase, found in Pseudomonas aeruginosa (strain LESB58).